The following is a 385-amino-acid chain: tRNA-specific 2-thiouridylase MnmA (385 aa).

ATP is bound by residues A18–S25 and L44. C112 acts as the Nucleophile in catalysis. A disulfide bridge connects residues C112 and C209. Residue G136 coordinates ATP. The interaction with tRNA stretch occupies residues R159–Q161. Catalysis depends on C209, which acts as the Cysteine persulfide intermediate.

It belongs to the MnmA/TRMU family.

The protein resides in the cytoplasm. It carries out the reaction S-sulfanyl-L-cysteinyl-[protein] + uridine(34) in tRNA + AH2 + ATP = 2-thiouridine(34) in tRNA + L-cysteinyl-[protein] + A + AMP + diphosphate + H(+). In terms of biological role, catalyzes the 2-thiolation of uridine at the wobble position (U34) of tRNA, leading to the formation of s(2)U34. The sequence is that of tRNA-specific 2-thiouridylase MnmA from Methylorubrum populi (strain ATCC BAA-705 / NCIMB 13946 / BJ001) (Methylobacterium populi).